A 333-amino-acid polypeptide reads, in one-letter code: Terpene synthase 2 (333 aa).

The DDxx(x)D/E motif motif lies at 82-87; it reads DDDLDT. Positions 219–227 match the NDxxSxxxD/E motif motif; that stretch reads NDCVSYAKE.

It belongs to the terpene synthase family.

The enzyme catalyses (2E,6E)-farnesyl diphosphate = (E)-beta-farnesene + diphosphate. It carries out the reaction (2E,6E)-farnesyl diphosphate = (1S,2S,4R)-beta-elemene + diphosphate. In terms of biological role, terpene synthase that converts its substrate farnesyl diphosphate (FPP) into the sesquiterpene (E)-beta-farnesene as major product. Is also able to convert FPP into delta-elemene, beta-elemene, (E)-beta-caryophyllene, 9-epi-(E)-caryophyllene, and a yet unidentified sesquiterpene. In Dictyostelium purpureum (Slime mold), this protein is Terpene synthase 2.